The primary structure comprises 59 residues: UPF0434 protein Sbal_1685 (59 aa).

The protein belongs to the UPF0434 family.

In Shewanella baltica (strain OS155 / ATCC BAA-1091), this protein is UPF0434 protein Sbal_1685.